The primary structure comprises 83 residues: Large ribosomal subunit protein eL31 (83 aa).

The protein belongs to the eukaryotic ribosomal protein eL31 family.

The chain is Large ribosomal subunit protein eL31 from Methanococcus aeolicus (strain ATCC BAA-1280 / DSM 17508 / OCM 812 / Nankai-3).